Reading from the N-terminus, the 214-residue chain is Urease accessory protein UreG (214 aa).

23–30 (GPVGSGKT) is a GTP binding site.

It belongs to the SIMIBI class G3E GTPase family. UreG subfamily. As to quaternary structure, homodimer. UreD, UreF and UreG form a complex that acts as a GTP-hydrolysis-dependent molecular chaperone, activating the urease apoprotein by helping to assemble the nickel containing metallocenter of UreC. The UreE protein probably delivers the nickel.

Its subcellular location is the cytoplasm. In terms of biological role, facilitates the functional incorporation of the urease nickel metallocenter. This process requires GTP hydrolysis, probably effectuated by UreG. The chain is Urease accessory protein UreG from Bordetella pertussis (strain Tohama I / ATCC BAA-589 / NCTC 13251).